A 114-amino-acid chain; its full sequence is Large ribosomal subunit protein bL19 (114 aa).

The protein belongs to the bacterial ribosomal protein bL19 family.

Its function is as follows. This protein is located at the 30S-50S ribosomal subunit interface and may play a role in the structure and function of the aminoacyl-tRNA binding site. This is Large ribosomal subunit protein bL19 from Clavibacter michiganensis subsp. michiganensis (strain NCPPB 382).